We begin with the raw amino-acid sequence, 309 residues long: Probable pyridoxal 5'-phosphate synthase subunit PDX1 (309 aa).

Aspartate 40 is a binding site for D-ribose 5-phosphate. The active-site Schiff-base intermediate with D-ribose 5-phosphate is lysine 97. Residue glycine 169 participates in D-ribose 5-phosphate binding. Arginine 181 provides a ligand contact to D-glyceraldehyde 3-phosphate. D-ribose 5-phosphate contacts are provided by residues glycine 230 and 251 to 252 (GS).

It belongs to the PdxS/SNZ family.

The catalysed reaction is aldehydo-D-ribose 5-phosphate + D-glyceraldehyde 3-phosphate + L-glutamine = pyridoxal 5'-phosphate + L-glutamate + phosphate + 3 H2O + H(+). It functions in the pathway cofactor biosynthesis; pyridoxal 5'-phosphate biosynthesis. Functionally, catalyzes the formation of pyridoxal 5'-phosphate from ribose 5-phosphate (RBP), glyceraldehyde 3-phosphate (G3P) and ammonia. The ammonia is provided by PDX2. Can also use ribulose 5-phosphate and dihydroxyacetone phosphate as substrates, resulting from enzyme-catalyzed isomerization of RBP and G3P, respectively. Also plays an indirect role in resistance to singlet oxygen-generating photosensitizers. In Ginkgo biloba (Ginkgo), this protein is Probable pyridoxal 5'-phosphate synthase subunit PDX1 (PDX1).